A 580-amino-acid polypeptide reads, in one-letter code: Sensor histidine kinase YvrG (580 aa).

Topologically, residues 1 to 6 (MRLRWK) are cytoplasmic. The chain crosses the membrane as a helical span at residues 7 to 27 (FLFHFFGQMLIVILLLTVMLV). Residues 28 to 261 (ASFFYLDARF…KSFLKVVLKA (234 aa)) are Extracellular-facing. The helical transmembrane segment at 262–282 (MFLVMAVLFMYIIWMTVWYMF) threads the bilayer. The Cytoplasmic portion of the chain corresponds to 283–580 (RFGLPIFHTI…TVITILFKKQ (298 aa)). Positions 363–580 (GLSHDLKTPL…TVITILFKKQ (218 aa)) constitute a Histidine kinase domain. Position 366 is a phosphohistidine; by autocatalysis (His366).

The protein resides in the cell membrane. The enzyme catalyses ATP + protein L-histidine = ADP + protein N-phospho-L-histidine.. Functionally, member of the two-component regulatory system YvrG/YvrH that positively regulates 7 transcriptional units (wprA, wapA-yxxG, dltABCDE, sunA, sunT-bdbA-yolJ-bdbB, sigO-rsoA, and sigX-rsiX), and negatively regulates the lytABC operon. Probably activates YvrH by phosphorylation. This chain is Sensor histidine kinase YvrG (yvrG), found in Bacillus subtilis (strain 168).